Here is a 172-residue protein sequence, read N- to C-terminus: Scytalone dehydratase (172 aa).

Tyr-30, Tyr-50, and Phe-53 together coordinate substrate. Catalysis depends on residues His-85 and His-110. Asn-131 is a binding site for substrate.

The protein belongs to the scytalone dehydratase family. As to quaternary structure, homotrimer. Each subunit contains an active site, located in the central part of the hydrophobic core of the monomer, which functions independently.

The protein localises to the endosome. The catalysed reaction is scytalone = 1,3,8-trihydroxynaphthalene + H2O. It functions in the pathway pigment biosynthesis; melanin biosynthesis. With respect to regulation, (N-phenoxypropyl)-carboxamides such as carpropamid and derivatives of norephedrine act as inhibitors of scytalone dehydratase activity. Functionally, scytalone dehydratase; part of the gene cluster that mediates the biosynthesis of dihydroxynaphthalene melanin, a bluish-green pigment and a structural component of the conidial wall. Within the pathway, catalyzes the dehydration of scytalone as well as of vermelone. Is also able to dehydrate the alternate substrate 2,3-dihydro-2,5-dihydroxy-4H-benzopyran-4-one (DDBO) to 5-hydroxy-4H-1-benzopyran-4-one (HBO). This is Scytalone dehydratase (SDH1) from Pyricularia oryzae (strain 70-15 / ATCC MYA-4617 / FGSC 8958) (Rice blast fungus).